The chain runs to 524 residues: Putative ATP-dependent RNA helicase R458 (524 aa).

The 214-residue stretch at 125 to 338 folds into the Helicase ATP-binding domain; it reads VPELIQRKDT…NSYFRKYSPI (214 aa). 138-145 lines the ATP pocket; sequence FKSGTGKT. A DEFD box motif is present at residues 268–271; that stretch reads DEFD. Residues 373 to 524 form the Helicase C-terminal domain; sequence IILDLLKQCR…QLPGDLSTLL (152 aa).

This sequence belongs to the DEAD box helicase family. eIF4A subfamily.

The catalysed reaction is ATP + H2O = ADP + phosphate + H(+). In terms of biological role, putative ATP-dependent RNA helicase. The sequence is that of Putative ATP-dependent RNA helicase R458 from Acanthamoeba polyphaga mimivirus (APMV).